The primary structure comprises 235 residues: Probable septum site-determining protein MinC (235 aa).

Positions 104–125 (KAVRPAPVEPATPSEPPQNANP) are disordered. The span at 110–119 (PVEPATPSEP) shows a compositional bias: pro residues.

Belongs to the MinC family. Interacts with MinD and FtsZ.

In terms of biological role, cell division inhibitor that blocks the formation of polar Z ring septums. Rapidly oscillates between the poles of the cell to destabilize FtsZ filaments that have formed before they mature into polar Z rings. Prevents FtsZ polymerization. This chain is Probable septum site-determining protein MinC, found in Salmonella agona (strain SL483).